Here is a 375-residue protein sequence, read N- to C-terminus: Chaperone protein DnaJ (375 aa).

The 66-residue stretch at G5–G70 folds into the J domain. Residues G142–R220 form a CR-type zinc finger. Residues C155, C158, C172, C175, C194, C197, C208, and C211 each coordinate Zn(2+). CXXCXGXG motif repeat units follow at residues C155–G162, C172–G179, C194–G201, and C208–G215.

It belongs to the DnaJ family. Homodimer. The cofactor is Zn(2+).

Its subcellular location is the cytoplasm. Its function is as follows. Participates actively in the response to hyperosmotic and heat shock by preventing the aggregation of stress-denatured proteins and by disaggregating proteins, also in an autonomous, DnaK-independent fashion. Unfolded proteins bind initially to DnaJ; upon interaction with the DnaJ-bound protein, DnaK hydrolyzes its bound ATP, resulting in the formation of a stable complex. GrpE releases ADP from DnaK; ATP binding to DnaK triggers the release of the substrate protein, thus completing the reaction cycle. Several rounds of ATP-dependent interactions between DnaJ, DnaK and GrpE are required for fully efficient folding. Also involved, together with DnaK and GrpE, in the DNA replication of plasmids through activation of initiation proteins. The chain is Chaperone protein DnaJ from Leptospira biflexa serovar Patoc (strain Patoc 1 / Ames).